The sequence spans 260 residues: Granzyme A (260 aa).

A signal peptide spans 1–26; sequence MRNASGPRGPSLATLLFLLLIPEGGC. Positions 27 to 28 are cleaved as a propeptide — activation peptide; sequence ER. One can recognise a Peptidase S1 domain in the interval 29-257; the sequence is IIGGDTVVPH…HLNWIKKIMK (229 aa). Cysteine 54 and cysteine 70 are oxidised to a cystine. Active-site charge relay system residues include histidine 69 and aspartate 113. 3 disulfide bridges follow: cysteine 147–cysteine 217, cysteine 178–cysteine 196, and cysteine 207–cysteine 232. 2 N-linked (GlcNAc...) asparagine glycosylation sites follow: asparagine 157 and asparagine 169. The Charge relay system role is filled by serine 211.

It belongs to the peptidase S1 family. Granzyme subfamily. As to quaternary structure, homodimer; disulfide-linked. Interacts with APEX1. In terms of tissue distribution, found in cytotoxic lymphocytes and in normal lymphoid tissues such as thymus and spleen. As to expression, more abundant in lymphoid tissues than isoform HF2.

The protein localises to the secreted. The protein resides in the cytoplasmic granule. It catalyses the reaction Hydrolysis of proteins, including fibronectin, type IV collagen and nucleolin. Preferential cleavage: -Arg-|-Xaa-, -Lys-|-Xaa- &gt;&gt; -Phe-|-Xaa- in small molecule substrates.. In terms of biological role, abundant protease in the cytosolic granules of cytotoxic T-cells and NK-cells which activates caspase-independent pyroptosis when delivered into the target cell through the immunological synapse. It cleaves after Lys or Arg. Cleaves APEX1 after 'Lys-31' and destroys its oxidative repair activity. Cleaves the nucleosome assembly protein SET after 'Lys-189', which disrupts its nucleosome assembly activity and allows the SET complex to translocate into the nucleus to nick and degrade the DNA. The polypeptide is Granzyme A (Gzma) (Mus musculus (Mouse)).